A 105-amino-acid chain; its full sequence is UPF0235 protein A1G_07140 (105 aa).

This sequence belongs to the UPF0235 family.

This is UPF0235 protein A1G_07140 from Rickettsia rickettsii (strain Sheila Smith).